The primary structure comprises 716 residues: Dynein axonemal intermediate chain 7 (716 aa).

Belongs to the DNAI7 family. Part of the multisubunit axonemal dynein complex formed at least of two heavy chains and a number of intermediate and light chains. Interacts with tubulin. Associates with microtubule. In terms of processing, ubiquitinated. Ubiquitination leads to its degradation through the 26S proteasome. Ubiquitin-proteasome-mediated DNAI7 degradation occurs in mitosis.

The protein resides in the cell projection. It localises to the cilium. Its subcellular location is the cytoplasm. Its function is as follows. Via its association with the multisubunit axonemal dynein complex, is potentially involved in the regulation of cilia function. May also act as a cell cycle regulator. This Homo sapiens (Human) protein is Dynein axonemal intermediate chain 7.